Reading from the N-terminus, the 446-residue chain is Maltoporin (446 aa).

The N-terminal stretch at 1–25 (MMITLRKLPLAVAVAAGVMSAQAMA) is a signal peptide.

This sequence belongs to the porin LamB (TC 1.B.3) family. Homotrimer formed of three 18-stranded antiparallel beta-barrels, containing three independent channels.

Its subcellular location is the cell outer membrane. The catalysed reaction is beta-maltose(in) = beta-maltose(out). Functionally, involved in the transport of maltose and maltodextrins. This chain is Maltoporin, found in Escherichia coli O157:H7 (strain EC4115 / EHEC).